The chain runs to 305 residues: ATP synthase F(0) complex subunit B2, mitochondrial (305 aa).

Residues Met-1 to Leu-22 constitute a mitochondrion transit peptide.

This sequence belongs to the eukaryotic ATPase B chain family. Subunit of the F-type ATPase which has 2 components, CF(1) - the catalytic core - and CF(0) - the membrane proton channel.

The protein localises to the mitochondrion. The protein resides in the mitochondrion inner membrane. Mitochondrial membrane ATP synthase (F(1)F(0) ATP synthase or Complex V) produces ATP from ADP in the presence of a proton gradient across the membrane which is generated by electron transport complexes of the respiratory chain. F-type ATPases consist of two structural domains, F(1) - containing the extramembraneous catalytic core, and F(0) - containing the membrane proton channel, linked together by a central stalk and a peripheral stalk. During catalysis, ATP synthesis in the catalytic domain of F(1) is coupled via a rotary mechanism of the central stalk subunits to proton translocation. Part of the complex F(0) domain and the peripheric stalk, which acts as a stator to hold the subunits of the catalytic subcomplexes relative to the rotary elements. Plays a role in somatic development. Does not play a role in germline development. This is ATP synthase F(0) complex subunit B2, mitochondrial from Caenorhabditis elegans.